Here is a 239-residue protein sequence, read N- to C-terminus: Putative CRISPR-associated endoribonuclease-like protein Cas6nc (239 aa).

Belongs to the CRISPR-associated protein Cas6/Cse3/CasE family. In terms of assembly, monomer; homodimer when crystallized in the presence of crRNA. Varying the crRNA sequence varies degree of oligomerization and structure.

Its function is as follows. CRISPR (clustered regularly interspaced short palindromic repeat), is an adaptive immune system that provides protection against mobile genetic elements (viruses, transposable elements and conjugative plasmids). CRISPR clusters contain sequences complementary to antecedent mobile elements and target invading nucleic acids. CRISPR clusters are transcribed and processed into CRISPR RNA (crRNA), also called psiRNA (prokaryotic silencing) in this organism (Potential). The polypeptide is Putative CRISPR-associated endoribonuclease-like protein Cas6nc (cas6nc) (Pyrococcus horikoshii (strain ATCC 700860 / DSM 12428 / JCM 9974 / NBRC 100139 / OT-3)).